The following is a 1733-amino-acid chain: DNA-directed RNA polymerase II subunit RPB1 (1733 aa).

Zn(2+)-binding residues include Cys-67, Cys-70, Cys-77, His-80, Cys-107, Cys-110, Cys-148, and Cys-167. Residues 248–260 (PSISFNESQRGED) are lid loop. The tract at residues 306-323 (NDIAGQPQALQKSGRPVK) is rudder loop. Residues Asp-481, Asp-483, and Asp-485 each contribute to the Mg(2+) site. Residue Lys-695 forms a Glycyl lysine isopeptide (Lys-Gly) (interchain with G-Cter in ubiquitin) linkage. The tract at residues 810–822 (PQEFFFHAMGGRE) is bridging helix. Glycyl lysine isopeptide (Lys-Gly) (interchain with G-Cter in ubiquitin) cross-links involve residues Lys-1246 and Lys-1350. At Thr-1471 the chain carries Phosphothreonine. Positions 1537–1733 (VSSPGFSPTS…QKHNENENSR (197 aa)) are disordered. The segment covering 1538–1719 (SSPGFSPTSP…YSPGSPAYSP (182 aa)) has biased composition (low complexity). 23 consecutive repeat copies span residues 1549 to 1555 (YSPTSPA), 1556 to 1562 (YSPTSPS), 1563 to 1569 (YSPTSPS), 1570 to 1576 (YSPTSPS), 1577 to 1583 (YSPTSPS), 1584 to 1590 (YSPTSPS), 1591 to 1597 (YSPTSPS), 1598 to 1604 (YSPTSPS), 1605 to 1611 (YSPTSPS), 1612 to 1618 (YSPTSPS), 1619 to 1625 (YSPTSPS), 1626 to 1632 (YSPTSPS), 1633 to 1639 (YSPTSPS), 1640 to 1646 (YSPTSPS), 1647 to 1653 (YSPTSPS), 1654 to 1660 (YSPTSPA), 1661 to 1667 (YSPTSPS), 1668 to 1674 (YSPTSPS), 1675 to 1681 (YSPTSPS), 1682 to 1688 (YSPTSPS), 1689 to 1695 (YSPTSPN), 1696 to 1702 (YSPTSPS), and 1703 to 1709 (YSPTSPG). A C-terminal domain (CTD); 24 X 7 AA approximate tandem repeats of Y-S-P-T-S-P-[A-S-N-G] region spans residues 1549-1716 (YSPTSPAYSP…SPGYSPGSPA (168 aa)). The stretch at 1710–1716 (YSPGSPA) is one 24; approximate repeat. Residues 1720–1733 (KQDEQKHNENENSR) are compositionally biased toward basic and acidic residues.

The protein belongs to the RNA polymerase beta' chain family. As to quaternary structure, component of the RNA polymerase II (Pol II) complex consisting of 12 subunits. Interacts with DEF1; the interaction is direct and serves to bridge RPB1 to the Elongin complex in a DNA-damaged dependent manner. Interacts with the Elongin subunit ELA1. Interacts with the Elongin subunit ELC1. Interacts with ASK10. Interacts with ESS1. Interacts with RTT103. Interacts with SHE2. Post-translationally, the tandem 7 residues repeats in the C-terminal domain (CTD) can be highly phosphorylated. The phosphorylation activates Pol II. Phosphorylation occurs mainly at residues 'Ser-2' and 'Ser-5' of the heptapeptide repeat. The phosphorylated form of Pol II appears to carry, on average, one phosphate per repeat. The phosphorylation state is believed to result from the balanced action of site-specific CTD kinases and phosphatases, and a 'CTD code' that specifies the position of Pol II within the transcription cycle has been proposed. Phosphorylation at 'Ser-5' occurs in promoter-proximal regions in early elongation. Phosphorylation at 'Ser-2' predominates in regions more distal to the promoter and triggers binding of the 3' RNA processing machinery. CTD kinases include KIN28 (as part of the TFKII complex, a subcomplex of the TFIIH holo complex), SSN3/SRB10 (as part of the SRB8-11 complex, a module of the Mediator complex), CTK1 (as part of CTD kinase), and probably BUR1 (as part of the BUR1-BUR2 kinase complex). Phosphatases include FCP1 and SSU72. In terms of processing, following transcription stress, the elongating form of RNA polymerase II (RNA pol IIo) is polyubiquitinated via 'Lys-63'-linkages on Lys-1246 by the RSP5-UBA1-UBC5 complex at DNA damage sites without leading to degradation: ubiquitination promotes RNA pol IIo backtracking to allow access by the transcription-coupled nucleotide excision repair (TC-NER) machinery. Subsequent DEF1-dependent polyubiquitination by the elongin complex via 'Lys-48'-linkages may lead to proteasome-mediated degradation; presumably at stalled RNA pol II where TC-NER has failed, to halt global transcription and enable 'last resort' DNA repair pathways.

It is found in the nucleus. The enzyme catalyses RNA(n) + a ribonucleoside 5'-triphosphate = RNA(n+1) + diphosphate. DNA-dependent RNA polymerase catalyzes the transcription of DNA into RNA using the four ribonucleoside triphosphates as substrates. Largest and catalytic component of RNA polymerase II which synthesizes mRNA precursors and many functional non-coding RNAs. Forms the polymerase active center together with the second largest subunit. Pol II is the central component of the basal RNA polymerase II transcription machinery. During a transcription cycle, Pol II, general transcription factors and the Mediator complex assemble as the preinitiation complex (PIC) at the promoter. 11-15 base pairs of DNA surrounding the transcription start site are melted and the single-stranded DNA template strand of the promoter is positioned deeply within the central active site cleft of Pol II to form the open complex. After synthesis of about 30 bases of RNA, Pol II releases its contacts with the core promoter and the rest of the transcription machinery (promoter clearance) and enters the stage of transcription elongation in which it moves on the template as the transcript elongates. Pol II appears to oscillate between inactive and active conformations at each step of nucleotide addition. Elongation is influenced by the phosphorylation status of the C-terminal domain (CTD) of Pol II largest subunit (RPB1), which serves as a platform for assembly of factors that regulate transcription initiation, elongation, termination and mRNA processing. Pol II is composed of mobile elements that move relative to each other. The core element with the central large cleft comprises RPB3, RBP10, RPB11, RPB12 and regions of RPB1 and RPB2 forming the active center. The clamp element (portions of RPB1, RPB2 and RPB3) is connected to the core through a set of flexible switches and moves to open and close the cleft. A bridging helix emanates from RPB1 and crosses the cleft near the catalytic site and is thought to promote translocation of Pol II by acting as a ratchet that moves the RNA-DNA hybrid through the active site by switching from straight to bent conformations at each step of nucleotide addition. In elongating Pol II, the lid loop (RPB1) appears to act as a wedge to drive apart the DNA and RNA strands at the upstream end of the transcription bubble and guide the RNA strand toward the RNA exit groove located near the base of the largely unstructured CTD domain of RPB1. The rudder loop (RPB1) interacts with single-stranded DNA after separation from the RNA strand, likely preventing reassociation with the exiting RNA. The cleft is surrounded by jaws: an upper jaw formed by portions of RBP1, RPB2 and RPB9, and a lower jaw, formed by RPB5 and portions of RBP1. The jaws are thought to grab the incoming DNA template, mainly by RPB5 direct contacts to DNA. This chain is DNA-directed RNA polymerase II subunit RPB1 (RPO21), found in Saccharomyces cerevisiae (strain ATCC 204508 / S288c) (Baker's yeast).